The sequence spans 86 residues: Large ribosomal subunit protein bL27 (86 aa).

Over residues 1-10 (MAQKKGGGST) the composition is skewed to gly residues. A disordered region spans residues 1-21 (MAQKKGGGSTRNGRDSESKRL).

This sequence belongs to the bacterial ribosomal protein bL27 family.

The chain is Large ribosomal subunit protein bL27 from Ralstonia nicotianae (strain ATCC BAA-1114 / GMI1000) (Ralstonia solanacearum).